A 217-amino-acid chain; its full sequence is Small ribosomal subunit protein uS3 (217 aa).

One can recognise a KH type-2 domain in the interval 40–110; it reads IRDLINKWFN…EVYINIHEVR (71 aa).

The protein belongs to the universal ribosomal protein uS3 family. Part of the 30S ribosomal subunit. Forms a tight complex with proteins S10 and S14.

Binds the lower part of the 30S subunit head. Binds mRNA in the 70S ribosome, positioning it for translation. The protein is Small ribosomal subunit protein uS3 of Rickettsia typhi (strain ATCC VR-144 / Wilmington).